The sequence spans 306 residues: Oligopeptide transport system permease protein OppB (306 aa).

Topologically, residues 1–12 are cytoplasmic; the sequence is MLKFILRRCLEA. A helical membrane pass occupies residues 13–30; that stretch reads IPTLFILITISFFMMRLA. The Periplasmic segment spans residues 31-101; the sequence is PGSPFTGERA…ASFPVSAKLG (71 aa). One can recognise an ABC transmembrane type-1 domain in the interval 94-293; sequence FPVSAKLGAA…ALTILFNAIV (200 aa). A helical transmembrane segment spans residues 102–121; the sequence is AAAFLLAVIIGVSAGVIAAL. Residues 122 to 133 lie on the Cytoplasmic side of the membrane; that stretch reads KQNTRWDYTVMG. Residues 134 to 156 traverse the membrane as a helical segment; sequence FAMTGVVIPSFVVAPLLVMVFAI. Topologically, residues 157-165 are periplasmic; sequence TLQWLPGGG. Residues 166–188 form a helical membrane-spanning segment; the sequence is WNGGALKFMILPMVALSLAYIAS. At 189–227 the chain is on the cytoplasmic side; it reads IARITRGSMIEVLHSNFIRTARAKGLPMRRIIFRHALKP. Residues 228–250 form a helical membrane-spanning segment; sequence ALLPVLSYMGPAFVGIITGSMVI. The Periplasmic segment spans residues 251-277; that stretch reads ETIYGLPGIGQLFVNGALNRDYSLVLS. A helical membrane pass occupies residues 278-300; that stretch reads LTILVGALTILFNAIVDVLYAVI. Residues 301–306 lie on the Cytoplasmic side of the membrane; it reads DPKIRY.

The protein belongs to the binding-protein-dependent transport system permease family. OppBC subfamily. The complex is composed of two ATP-binding proteins (OppD and OppF), two transmembrane proteins (OppB and OppC) and a solute-binding protein (OppA).

Its subcellular location is the cell inner membrane. Part of the ABC transporter complex OppABCDF involved in the uptake of oligopeptides, including the cell wall murein tripeptide L-alanyl-gamma-D-glutamyl-meso-diaminopimelate. Responsible for the translocation of the substrate across the membrane. Plays an important nutritional role and is involved in the recycling of cell wall peptides. The polypeptide is Oligopeptide transport system permease protein OppB (Salmonella typhimurium (strain LT2 / SGSC1412 / ATCC 700720)).